Reading from the N-terminus, the 567-residue chain is Potassium-transporting ATPase potassium-binding subunit (567 aa).

12 helical membrane passes run 5 to 25, 64 to 84, 136 to 156, 179 to 199, 254 to 274, 285 to 305, 328 to 350, 375 to 395, 421 to 441, 459 to 481, 486 to 506, and 529 to 549; these read GWLQ…PLGG, TTYS…LYFL, GFTV…IALI, LYVL…LGVP, ISNL…TNVF, WAIL…TYWA, VRFG…CGAV, IVGG…IAIF, MLAV…SVVL, ILYA…SANT, ITLG…ALAI, and LFVG…FFPA.

This sequence belongs to the KdpA family. The system is composed of three essential subunits: KdpA, KdpB and KdpC.

The protein resides in the cell inner membrane. In terms of biological role, part of the high-affinity ATP-driven potassium transport (or Kdp) system, which catalyzes the hydrolysis of ATP coupled with the electrogenic transport of potassium into the cytoplasm. This subunit binds the periplasmic potassium ions and delivers the ions to the membrane domain of KdpB through an intramembrane tunnel. In Rhizobium rhizogenes (strain K84 / ATCC BAA-868) (Agrobacterium radiobacter), this protein is Potassium-transporting ATPase potassium-binding subunit.